Here is a 413-residue protein sequence, read N- to C-terminus: MTICQFFLQGRCRFGDRCWNEHPRGGGGRPHSAGPVRGAGGGWGAASQRYANVIQPPIFKHSTWGGSGDGGGFSGASDFGSPGNKSAVFSQNRFSALSSAHPADGFSDEEQRLLDCVAKDMATWESSGQWMFSCYSPEAGKPNVSGFREFSAEEVRLEYYNCSANNNTENYINSVNQLVQERRNRLQELKALNASGKESLLSQLKNAVTQPLPSLGFGGQQASSFGFPSFPVSSSSGAASFSFKANPSVPPGNAAAVGSSAAASNPPTFGVTSSPSVPNPVGSGNSSAPSAASFSFKTSGTTSGCGTSGLSGFGSSAAANSSSTAPLPVSATPSAATGTSQSGASSASAAQTAGASGHNVTSAPSAVPNGIASDKLYTPRSELTAEELEQFEAKRFTLGKIPLKPPPIDLLYL.

A C3H1-type zinc finger spans residues 1 to 25 (MTICQFFLQGRCRFGDRCWNEHPRG). FG repeat units lie at residues 14-15 (FG), 79-80 (FG), 217-218 (FG), 225-226 (FG), 269-270 (FG), and 313-314 (FG). Residues 252–293 (GNAAAVGSSAAASNPPTFGVTSSPSVPNPVGSGNSSAPSAAS) form a disordered region. Over residues 321–357 (SSSTAPLPVSATPSAATGTSQSGASSASAAQTAGASG) the composition is skewed to low complexity. The segment at 321 to 369 (SSSTAPLPVSATPSAATGTSQSGASSASAAQTAGASGHNVTSAPSAVPN) is disordered.

In terms of assembly, probable component of the nuclear pore complex (NPC).

The protein resides in the nucleus. It is found in the nuclear pore complex. The protein localises to the nucleus membrane. Functionally, required for the export of mRNAs containing poly(A) tails from the nucleus into the cytoplasm. In Gallus gallus (Chicken), this protein is Nucleoporin NUP42 (NUP42).